We begin with the raw amino-acid sequence, 264 residues long: GTP cyclohydrolase FolE2 (264 aa).

Belongs to the GTP cyclohydrolase IV family.

The enzyme catalyses GTP + H2O = 7,8-dihydroneopterin 3'-triphosphate + formate + H(+). Its pathway is cofactor biosynthesis; 7,8-dihydroneopterin triphosphate biosynthesis; 7,8-dihydroneopterin triphosphate from GTP: step 1/1. In terms of biological role, converts GTP to 7,8-dihydroneopterin triphosphate. The sequence is that of GTP cyclohydrolase FolE2 from Vesicomyosocius okutanii subsp. Calyptogena okutanii (strain HA).